The following is a 332-amino-acid chain: 5-dehydro-2-deoxygluconokinase (332 aa).

Belongs to the carbohydrate kinase PfkB family.

It carries out the reaction 5-dehydro-2-deoxy-D-gluconate + ATP = 6-phospho-5-dehydro-2-deoxy-D-gluconate + ADP + H(+). It functions in the pathway polyol metabolism; myo-inositol degradation into acetyl-CoA; acetyl-CoA from myo-inositol: step 5/7. Catalyzes the phosphorylation of 5-dehydro-2-deoxy-D-gluconate (2-deoxy-5-keto-D-gluconate or DKG) to 6-phospho-5-dehydro-2-deoxy-D-gluconate (DKGP). This chain is 5-dehydro-2-deoxygluconokinase, found in Bacillus thuringiensis (strain Al Hakam).